Here is a 295-residue protein sequence, read N- to C-terminus: Large ribosomal subunit protein uL2 (295 aa).

The disordered stretch occupies residues 243–295 (WRPHTRGTAMNPVDHPHGGGEGRTRGKHPESPWDGRRRDTRREGVRSTPISLS). Residues 256-287 (DHPHGGGEGRTRGKHPESPWDGRRRDTRREGV) show a composition bias toward basic and acidic residues.

This sequence belongs to the universal ribosomal protein uL2 family. Part of the 50S ribosomal subunit. Forms a bridge to the 30S subunit in the 70S ribosome.

One of the primary rRNA binding proteins. Required for association of the 30S and 50S subunits to form the 70S ribosome, for tRNA binding and peptide bond formation. It has been suggested to have peptidyltransferase activity; this is somewhat controversial. Makes several contacts with the 16S rRNA in the 70S ribosome. In Aquifex pyrophilus, this protein is Large ribosomal subunit protein uL2.